Here is a 149-residue protein sequence, read N- to C-terminus: Large ribosomal subunit protein bL9 (149 aa).

It belongs to the bacterial ribosomal protein bL9 family.

Binds to the 23S rRNA. The polypeptide is Large ribosomal subunit protein bL9 (Dichelobacter nodosus (strain VCS1703A)).